The sequence spans 249 residues: Pyridoxine 5'-phosphate synthase (249 aa).

Asn-10 serves as a coordination point for 3-amino-2-oxopropyl phosphate. Residue 12–13 participates in 1-deoxy-D-xylulose 5-phosphate binding; that stretch reads DH. Residue Arg-21 participates in 3-amino-2-oxopropyl phosphate binding. His-46 serves as the catalytic Proton acceptor. 1-deoxy-D-xylulose 5-phosphate contacts are provided by Arg-48 and His-53. Catalysis depends on Glu-73, which acts as the Proton acceptor. Thr-103 contributes to the 1-deoxy-D-xylulose 5-phosphate binding site. His-194 acts as the Proton donor in catalysis. Residues Gly-195 and 216 to 217 each bind 3-amino-2-oxopropyl phosphate; that span reads GH.

It belongs to the PNP synthase family. As to quaternary structure, homooctamer; tetramer of dimers.

The protein localises to the cytoplasm. The enzyme catalyses 3-amino-2-oxopropyl phosphate + 1-deoxy-D-xylulose 5-phosphate = pyridoxine 5'-phosphate + phosphate + 2 H2O + H(+). It functions in the pathway cofactor biosynthesis; pyridoxine 5'-phosphate biosynthesis; pyridoxine 5'-phosphate from D-erythrose 4-phosphate: step 5/5. Catalyzes the complicated ring closure reaction between the two acyclic compounds 1-deoxy-D-xylulose-5-phosphate (DXP) and 3-amino-2-oxopropyl phosphate (1-amino-acetone-3-phosphate or AAP) to form pyridoxine 5'-phosphate (PNP) and inorganic phosphate. This is Pyridoxine 5'-phosphate synthase from Rhodospirillum rubrum (strain ATCC 11170 / ATH 1.1.1 / DSM 467 / LMG 4362 / NCIMB 8255 / S1).